Reading from the N-terminus, the 341-residue chain is Holliday junction branch migration complex subunit RuvB (341 aa).

The segment at 3-184 is large ATPase domain (RuvB-L); sequence DDFDIRDARM…FGINMHLEYY (182 aa). Residues L23, R24, G65, K68, T69, T70, 131 to 133, R174, Y184, and R221 each bind ATP; that span reads EDY. T69 serves as a coordination point for Mg(2+). Residues 185-255 are small ATPAse domain (RuvB-S); that stretch reads DMETLTKIVL…IACFSLEALN (71 aa). Positions 258-341 are head domain (RuvB-H); it reads RYGLDQIDNK…RVGEQGFLFD (84 aa). Residues R313 and R318 each contribute to the DNA site.

It belongs to the RuvB family. In terms of assembly, homohexamer. Forms an RuvA(8)-RuvB(12)-Holliday junction (HJ) complex. HJ DNA is sandwiched between 2 RuvA tetramers; dsDNA enters through RuvA and exits via RuvB. An RuvB hexamer assembles on each DNA strand where it exits the tetramer. Each RuvB hexamer is contacted by two RuvA subunits (via domain III) on 2 adjacent RuvB subunits; this complex drives branch migration. In the full resolvosome a probable DNA-RuvA(4)-RuvB(12)-RuvC(2) complex forms which resolves the HJ.

It localises to the cytoplasm. It catalyses the reaction ATP + H2O = ADP + phosphate + H(+). The RuvA-RuvB-RuvC complex processes Holliday junction (HJ) DNA during genetic recombination and DNA repair, while the RuvA-RuvB complex plays an important role in the rescue of blocked DNA replication forks via replication fork reversal (RFR). RuvA specifically binds to HJ cruciform DNA, conferring on it an open structure. The RuvB hexamer acts as an ATP-dependent pump, pulling dsDNA into and through the RuvAB complex. RuvB forms 2 homohexamers on either side of HJ DNA bound by 1 or 2 RuvA tetramers; 4 subunits per hexamer contact DNA at a time. Coordinated motions by a converter formed by DNA-disengaged RuvB subunits stimulates ATP hydrolysis and nucleotide exchange. Immobilization of the converter enables RuvB to convert the ATP-contained energy into a lever motion, pulling 2 nucleotides of DNA out of the RuvA tetramer per ATP hydrolyzed, thus driving DNA branch migration. The RuvB motors rotate together with the DNA substrate, which together with the progressing nucleotide cycle form the mechanistic basis for DNA recombination by continuous HJ branch migration. Branch migration allows RuvC to scan DNA until it finds its consensus sequence, where it cleaves and resolves cruciform DNA. This Parabacteroides distasonis (strain ATCC 8503 / DSM 20701 / CIP 104284 / JCM 5825 / NCTC 11152) protein is Holliday junction branch migration complex subunit RuvB.